A 151-amino-acid polypeptide reads, in one-letter code: Ribosome maturation factor RimP (151 aa).

This sequence belongs to the RimP family.

Its subcellular location is the cytoplasm. Its function is as follows. Required for maturation of 30S ribosomal subunits. The sequence is that of Ribosome maturation factor RimP from Caldicellulosiruptor saccharolyticus (strain ATCC 43494 / DSM 8903 / Tp8T 6331).